The following is a 414-amino-acid chain: Putative transporter AmpG 4 (414 aa).

The next 12 helical transmembrane spans lie at 15 to 35 (IFIL…TLSV), 44 to 63 (IAVI…KVFW), 84 to 104 (WLIL…KENP), 109 to 129 (TSLY…DIAV), 150 to 170 (VFGY…LAEI), 177 to 197 (LTFV…ITVN), 230 to 250 (FAVT…MLGA), 268 to 288 (IIAK…GGIV), 295 to 315 (FKGL…FIWL), 324 to 344 (ALLI…TALV), 360 to 379 (YALL…IYAG), and 389 to 409 (GFFI…MYLN).

The protein belongs to the major facilitator superfamily.

It localises to the cell inner membrane. The protein is Putative transporter AmpG 4 (ampG4) of Rickettsia felis (strain ATCC VR-1525 / URRWXCal2) (Rickettsia azadi).